The primary structure comprises 160 residues: Nucleotide-binding protein CPS_1098 (160 aa).

The protein belongs to the YajQ family.

Functionally, nucleotide-binding protein. The polypeptide is Nucleotide-binding protein CPS_1098 (Colwellia psychrerythraea (strain 34H / ATCC BAA-681) (Vibrio psychroerythus)).